The following is a 242-amino-acid chain: Venom nerve growth factor 3 (242 aa).

The signal sequence occupies residues 1–18; sequence MSMLCYTLIIAFLIGIWA. The propeptide occupies 19–125; it reads APKSEDNVPL…ALNRNIRSKR (107 aa). A compositionally biased stretch (basic and acidic residues) spans 48–66; that stretch reads LKTSRNTDQRHPAPKKAED. Residues 48–69 form a disordered region; sequence LKTSRNTDQRHPAPKKAEDQEL. Cystine bridges form between cysteine 139–cysteine 203, cysteine 181–cysteine 231, and cysteine 191–cysteine 233. Residue asparagine 147 is glycosylated (N-linked (GlcNAc...) asparagine).

It belongs to the NGF-beta family. In terms of assembly, homodimer; non-covalently linked. As to expression, expressed by the venom gland.

Its subcellular location is the secreted. Functionally, nerve growth factor is important for the development and maintenance of the sympathetic and sensory nervous systems. It stimulates division and differentiation of sympathetic and embryonic sensory neurons as well as basal forebrain cholinergic neurons in the brain. Its relevance in the snake venom is not clear. However, it has been shown to inhibit metalloproteinase-dependent proteolysis of platelet glycoprotein Ib alpha, suggesting a metalloproteinase inhibition to prevent metalloprotease autodigestion and/or protection against prey proteases. Binds a lipid between the two protein chains in the homodimer. The lipid-bound form promotes histamine relase from mouse mast cells, contrary to the lipid-free form. This chain is Venom nerve growth factor 3, found in Demansia vestigiata (Lesser black whip snake).